The following is a 604-amino-acid chain: Prostaglandin G/H synthase 2 (604 aa).

The signal sequence occupies residues 1–17 (MLARALLLCAAVALSHA). One can recognise an EGF-like domain in the interval 18–55 (ANPCCSNPCQNRGVCMTMGFDQYKCDCTRTGFYGENCS). Cystine bridges form between Cys-21-Cys-32, Cys-22-Cys-145, Cys-26-Cys-42, and Cys-44-Cys-54. Asn-53 is a glycosylation site (N-linked (GlcNAc...) asparagine). Arg-106 serves as a coordination point for substrate. N-linked (GlcNAc...) asparagine glycosylation occurs at Asn-130. The active-site Proton acceptor is the His-193. Tyr-341 serves as a coordination point for substrate. Tyr-371 serves as the catalytic For cyclooxygenase activity. Residue His-374 coordinates heme b. Asn-396 carries an N-linked (GlcNAc...) asparagine glycan. Cys-526 carries the S-nitrosocysteine modification. An intrachain disulfide couples Cys-555 to Cys-561. Position 565 is an O-acetylserine (Ser-565). N-linked (GlcNAc...) asparagine glycosylation occurs at Asn-580.

This sequence belongs to the prostaglandin G/H synthase family. Homodimer. Requires heme b as cofactor. S-nitrosylation by NOS2 (iNOS) activates enzyme activity. S-nitrosylation may take place on different Cys residues in addition to Cys-526. Post-translationally, acetylated at Ser-565 by SPHK1. During neuroinflammation, acetylation by SPHK1 promotes neuronal secretion of specialized preresolving mediators (SPMs), especially 15-R-lipoxin A4, which results in an increase of phagocytic microglia. Highest expression in kidney and urinary bladder.

The protein localises to the microsome membrane. It localises to the endoplasmic reticulum membrane. Its subcellular location is the nucleus inner membrane. It is found in the nucleus outer membrane. The enzyme catalyses (5Z,8Z,11Z,14Z)-eicosatetraenoate + AH2 + 2 O2 = prostaglandin H2 + A + H2O. It carries out the reaction (5Z,8Z,11Z,14Z)-eicosatetraenoate + 2 O2 = prostaglandin G2. The catalysed reaction is prostaglandin G2 + AH2 = prostaglandin H2 + A + H2O. It catalyses the reaction (5Z,8Z,11Z,14Z,17Z)-eicosapentaenoate + 2 O2 = prostaglandin G3. The enzyme catalyses prostaglandin G3 + AH2 = prostaglandin H3 + A + H2O. It carries out the reaction (8Z,11Z,14Z)-eicosatrienoate + 2 O2 = prostaglandin G1. The catalysed reaction is prostaglandin G1 + AH2 = prostaglandin H1 + A + H2O. It catalyses the reaction 2-(5Z,8Z,11Z,14Z)-eicosatetraenoyl-sn-glycero-3-phosphoethanolamine + 2 O2 = 2-(prostaglandin G2)-sn-glycero-3-phosphoethanolamine. The enzyme catalyses 2-(prostaglandin G2)-sn-glycero-3-phosphoethanolamine + AH2 = 2-(prostaglandin H2)-sn-glycero-3-phosphoethanolamine + A + H2O. It carries out the reaction 2-(5Z,8Z,11Z,14Z)-eicosatetraenoyl-sn-glycero-3-phosphocholine + 2 O2 = 2-(prostaglandin G2)-sn-glycero-3-phosphocholine. The catalysed reaction is 2-(prostaglandin G2)-sn-glycero-3-phosphocholine + AH2 = 2-(prostaglandin H2)-sn-glycero-3-phosphocholine + A + H2O. It catalyses the reaction (15S)-hydroperoxy-(5Z,8Z,11Z,13E)-eicosatetraenoate + AH2 = (15S)-hydroxy-(5Z,8Z,11Z,13E)-eicosatetraenoate + A + H2O. The enzyme catalyses 2-(5Z,8Z,11Z,14Z)-eicosatetraenoyl-sn-glycero-3-phosphocholine + AH2 + O2 = 2-[(15S)-hydroxy-(5Z,8Z,11Z,13E)-eicosatetraenoyl]-sn-glycero-3-phosphocholine + A + H2O. It carries out the reaction 2-(5Z,8Z,11Z,14Z)-eicosatetraenoyl-sn-glycero-3-phosphocholine + AH2 + O2 = 2-[(15R)-hydroxy-(5Z,8Z,11Z,13E)-eicosatetraenoyl]-sn-glycero-3-phosphocholine + A + H2O. The catalysed reaction is 2-(5Z,8Z,11Z,14Z)-eicosatetraenoyl-sn-glycero-3-phosphocholine + AH2 + O2 = 2-[(11R)-hydroxy-(5Z,8Z,12E,14Z)-eicosatetraenoyl]-sn-glycero-3-phosphocholine + A + H2O. It catalyses the reaction (9Z,12Z)-octadecadienoate + AH2 + O2 = 9-hydroxy-(10E,12Z)-octadecadienoate + A + H2O. The enzyme catalyses (9Z,12Z)-octadecadienoate + AH2 + O2 = 13-hydroxy-(9Z,11E)-octadecadienoate + A + H2O. It carries out the reaction (5Z,8Z,11Z,14Z)-eicosatetraenoate + AH2 + O2 = (15R)-hydroxy-(5Z,8Z,11Z,13E)-eicosatetraenoate + A + H2O. The catalysed reaction is (5Z,8Z,11Z,14Z)-eicosatetraenoate + AH2 + O2 = (11R)-hydroxy-(5Z,8Z,12E,14Z)-eicosatetraenoate + A + H2O. It catalyses the reaction (5Z,8Z,11Z,14Z,17Z)-eicosapentaenoate + AH2 + O2 = (11R)-hydroxy-(5Z,8Z,12E,14Z,17Z)-eicosapentaenoate + A + H2O. The enzyme catalyses (5Z,8Z,11Z,14Z,17Z)-eicosapentaenoate + AH2 + O2 = (18S)-hydroxy-(5Z,8Z,11Z,14Z,16E)-eicosapentaenoate + A + H2O. It carries out the reaction (5Z,8Z,11Z,14Z,17Z)-eicosapentaenoate + AH2 + O2 = (18R)-hydroxy-(5Z,8Z,11Z,14Z,16E)-eicosapentaenoate + A + H2O. The catalysed reaction is (5Z,8Z,11Z,14Z,17Z)-eicosapentaenoate + AH2 + O2 = (15R)-hydroxy-(5Z,8Z,11Z,13E,17Z)-eicosapentaenoate + A + H2O. It catalyses the reaction (5Z,8Z,11Z,14Z,17Z)-eicosapentaenoate + AH2 + O2 = (15S)-hydroxy-(5Z,8Z,11Z,13E,17Z)-eicosapentaenoate + A + H2O. The enzyme catalyses (7Z,10Z,13Z,16Z,19Z)-docosapentaenoate + AH2 + O2 = 13R-hydroxy-(7Z,10Z,14E,16Z,19Z)-docosapentaenoate + A + H2O. It carries out the reaction (4Z,7Z,10Z,13Z,16Z,19Z)-docosahexaenoate + AH2 + O2 = 13-hydroxy-(4Z,7Z,10Z,14E,16Z,19Z)-docosahexaenoate + A + H2O. The catalysed reaction is (5S)-hydroxy-(6E,8Z,11Z,14Z)-eicosatetraenoate + AH2 + O2 = (5S,15R)-dihydroxy-(6E,8Z,11Z,13E)-eicosatetraenoate + A + H2O. It catalyses the reaction (4Z,7Z,10Z,13Z,16Z,19Z)-docosahexaenoate + AH2 + O2 = 17R-hydroxy-(4Z,7Z,10Z,13Z,15E,19Z)-docosahexaenoate + A + H2O. The enzyme catalyses (5S)-hydroxy-(6E,8Z,11Z,14Z)-eicosatetraenoate + AH2 + O2 = (5S,15S)-dihydroxy-(6E,8Z,11Z,13E)-eicosatetraenoate + A + H2O. It carries out the reaction (5S)-hydroxy-(6E,8Z,11Z,14Z)-eicosatetraenoate + AH2 + O2 = (5S,11R)-dihydroxy-(6E,8Z,12E,14Z)-eicosatetraenoate + A + H2O. The catalysed reaction is 2-(5Z,8Z,11Z,14Z-eicosatetraenoyl)-glycerol + 2 O2 = 2-glyceryl-prostaglandin G2. It catalyses the reaction 2-glyceryl-prostaglandin G2 + AH2 = 2-glyceryl-prostaglandin H2 + A + H2O. The enzyme catalyses (5Z,8Z,11Z,14Z)-eicosatetraenoate + O2 = (15R)-hydroperoxy-(5Z,8Z,11Z,13E)-eicosatetraenoate. It carries out the reaction (5Z,8Z,11Z,14Z)-eicosatetraenoate + O2 = 11R-hydroperoxy-(5Z,8Z,12E,14Z)-eicosatetraenoate. The catalysed reaction is (9Z,12Z)-octadecadienoate + AH2 + O2 = (9R)-hydroxy-(10E,12Z)-octadecadienoate + A + H2O. It catalyses the reaction (9Z,12Z)-octadecadienoate + AH2 + O2 = (9S)-hydroxy-(10E,12Z)-octadecadienoate + A + H2O. The enzyme catalyses (9Z,12Z)-octadecadienoate + AH2 + O2 = (13S)-hydroxy-(9Z,11E)-octadecadienoate + A + H2O. It carries out the reaction (9Z,12Z)-octadecadienoate + AH2 + O2 = (13R)-hydroxy-(9Z,11E)-octadecadienoate + A + H2O. The protein operates within lipid metabolism; prostaglandin biosynthesis. Functionally, dual cyclooxygenase and peroxidase in the biosynthesis pathway of prostanoids, a class of C20 oxylipins mainly derived from arachidonate ((5Z,8Z,11Z,14Z)-eicosatetraenoate, AA, C20:4(n-6)), with a particular role in the inflammatory response. The cyclooxygenase activity oxygenates AA to the hydroperoxy endoperoxide prostaglandin G2 (PGG2), and the peroxidase activity reduces PGG2 to the hydroxy endoperoxide prostaglandin H2 (PGH2), the precursor of all 2-series prostaglandins and thromboxanes. This complex transformation is initiated by abstraction of hydrogen at carbon 13 (with S-stereochemistry), followed by insertion of molecular O2 to form the endoperoxide bridge between carbon 9 and 11 that defines prostaglandins. The insertion of a second molecule of O2 (bis-oxygenase activity) yields a hydroperoxy group in PGG2 that is then reduced to PGH2 by two electrons. Similarly catalyzes successive cyclooxygenation and peroxidation of dihomo-gamma-linoleate (DGLA, C20:3(n-6)) and eicosapentaenoate (EPA, C20:5(n-3)) to corresponding PGH1 and PGH3, the precursors of 1- and 3-series prostaglandins. In an alternative pathway of prostanoid biosynthesis, converts 2-arachidonoyl lysophopholipids to prostanoid lysophopholipids, which are then hydrolyzed by intracellular phospholipases to release free prostanoids. Metabolizes 2-arachidonoyl glycerol yielding the glyceryl ester of PGH2, a process that can contribute to pain response. Generates lipid mediators from n-3 and n-6 polyunsaturated fatty acids (PUFAs) via a lipoxygenase-type mechanism. Oxygenates PUFAs to hydroperoxy compounds and then reduces them to corresponding alcohols. Plays a role in the generation of resolution phase interaction products (resolvins) during both sterile and infectious inflammation. Metabolizes docosahexaenoate (DHA, C22:6(n-3)) to 17R-HDHA, a precursor of the D-series resolvins (RvDs). As a component of the biosynthetic pathway of E-series resolvins (RvEs), converts eicosapentaenoate (EPA, C20:5(n-3)) primarily to 18S-HEPE that is further metabolized by ALOX5 and LTA4H to generate 18S-RvE1 and 18S-RvE2. In vascular endothelial cells, converts docosapentaenoate (DPA, C22:5(n-3)) to 13R-HDPA, a precursor for 13-series resolvins (RvTs) shown to activate macrophage phagocytosis during bacterial infection. In activated leukocytes, contributes to oxygenation of hydroxyeicosatetraenoates (HETE) to diHETES (5,15-diHETE and 5,11-diHETE). Can also use linoleate (LA, (9Z,12Z)-octadecadienoate, C18:2(n-6)) as substrate and produce hydroxyoctadecadienoates (HODEs) in a regio- and stereospecific manner,being (9R)-HODE ((9R)-hydroxy-(10E,12Z)-octadecadienoate) and (13S)-HODE ((13S)-hydroxy-(9Z,11E)-octadecadienoate) its major products. During neuroinflammation, plays a role in neuronal secretion of specialized preresolving mediators (SPMs) 15R-lipoxin A4 that regulates phagocytic microglia. The sequence is that of Prostaglandin G/H synthase 2 (PTGS2) from Oryctolagus cuniculus (Rabbit).